The chain runs to 324 residues: RVTEQMKNEADTEYYGVISIGTPPESFKVIFDTGSSNLWVSSSHCSAQACSNHNKFKPRQSSTYVETGKTVDLTYGTGGMRGILGQDTVSVGGGSDPNQELGESQTEPGPFQAAAPFDGILGLAYPSIAAAGAVPVFDNMGSQSLVEKDLFSFYLSGGGANGSEVMLGGVDNSHYTGSIHWIPVTAEKYWQVALDGITVNGQTAACEGCQAIVDTGTSKIVAPVSALANIMKDIGASENQGEMMGNCASVQSLPDITFTINGVKQPLPPSAYIEGDQAFCTSGLGSSGVPSNTSELWIFGDVFLRNYYTIYDRTNNKVGFAPAA.

Residues 14 to 321 form the Peptidase A1 domain; sequence YYGVISIGTP…DRTNNKVGFA (308 aa). D32 is an active-site residue. The cysteines at positions 45 and 50 are disulfide-linked. The interval 86-109 is disordered; the sequence is QDTVSVGGGSDPNQELGESQTEPG. A compositionally biased stretch (polar residues) spans 96–107; sequence DPNQELGESQTE. C206 and C209 are disulfide-bonded. Residue D214 is part of the active site. Cysteines 247 and 280 form a disulfide.

The protein belongs to the peptidase A1 family.

The polypeptide is Pepsin-2B (Gadus morhua (Atlantic cod)).